The sequence spans 526 residues: Amine oxidase [flavin-containing] A (526 aa).

Methionine 1 carries the N-acetylmethionine modification. Topologically, residues 1–497 are cytoplasmic; sequence MTDLEKPNLA…HTFLERNLPS (497 aa). Serine 383 carries the phosphoserine modification. Cysteine 406 carries the post-translational modification S-8alpha-FAD cysteine. Residues 498–518 traverse the membrane as a helical; Anchor for type IV membrane protein segment; sequence VPGLLKITGVSTSVALLCFVL. The Mitochondrial intermembrane segment spans residues 519 to 526; it reads YKIKKLPC. Residues 520 to 522 form an interaction with membrane phospholipid headgroups region; that stretch reads KIK.

This sequence belongs to the flavin monoamine oxidase family. Monomer, homo- or heterodimer (containing two subunits of similar size). Each subunit contains a covalently bound flavin. Enzymatically active as monomer. The cofactor is FAD.

The protein localises to the mitochondrion outer membrane. It carries out the reaction a secondary aliphatic amine + O2 + H2O = a primary amine + an aldehyde + H2O2. It catalyses the reaction a primary methyl amine + O2 + H2O = an aldehyde + H2O2 + NH4(+). The catalysed reaction is (R)-adrenaline + O2 + H2O = (R)-3,4-dihydroxymandelaldehyde + methylamine + H2O2. The enzyme catalyses dopamine + O2 + H2O = 3,4-dihydroxyphenylacetaldehyde + H2O2 + NH4(+). It carries out the reaction tyramine + O2 + H2O = (4-hydroxyphenyl)acetaldehyde + H2O2 + NH4(+). It catalyses the reaction (R)-noradrenaline + O2 + H2O = (R)-3,4-dihydroxymandelaldehyde + H2O2 + NH4(+). The catalysed reaction is serotonin + O2 + H2O = (5-hydroxyindol-3-yl)acetaldehyde + H2O2 + NH4(+). The enzyme catalyses kynuramine + O2 + H2O = 3-(2-aminophenyl)-3-oxopropanal + H2O2 + NH4(+). It carries out the reaction tryptamine + O2 + H2O = indole-3-acetaldehyde + H2O2 + NH4(+). It catalyses the reaction 2-phenylethylamine + O2 + H2O = 2-phenylacetaldehyde + H2O2 + NH4(+). Functionally, catalyzes the oxidative deamination of primary and some secondary amine such as neurotransmitters, with concomitant reduction of oxygen to hydrogen peroxide and has important functions in the metabolism of neuroactive and vasoactive amines in the central nervous system and peripheral tissues. Preferentially oxidizes serotonin. Also catalyzes the oxidative deamination of kynuramine to 3-(2-aminophenyl)-3-oxopropanal that can spontaneously condense to 4-hydroxyquinoline. This is Amine oxidase [flavin-containing] A from Rattus norvegicus (Rat).